A 311-amino-acid chain; its full sequence is Tyrosine recombinase XerD (311 aa).

Residues M1 to I83 form the Core-binding (CB) domain. The Tyr recombinase domain occupies K104–L299. Residues R145, K176, H251, R254, and H277 contribute to the active site. Catalysis depends on Y286, which acts as the O-(3'-phospho-DNA)-tyrosine intermediate.

Belongs to the 'phage' integrase family. XerD subfamily. As to quaternary structure, forms a cyclic heterotetrameric complex composed of two molecules of XerC and two molecules of XerD.

Its subcellular location is the cytoplasm. In terms of biological role, site-specific tyrosine recombinase, which acts by catalyzing the cutting and rejoining of the recombining DNA molecules. The XerC-XerD complex is essential to convert dimers of the bacterial chromosome into monomers to permit their segregation at cell division. It also contributes to the segregational stability of plasmids. The sequence is that of Tyrosine recombinase XerD from Rickettsia prowazekii (strain Madrid E).